A 162-amino-acid polypeptide reads, in one-letter code: Putative ankyrin repeat protein RBE_0151 (162 aa).

ANK repeat units follow at residues 49-77 (EKWT…NINI), 81-110 (KGRT…VVAP), and 114-145 (YGWS…EHDK).

This chain is Putative ankyrin repeat protein RBE_0151, found in Rickettsia bellii (strain RML369-C).